Reading from the N-terminus, the 617-residue chain is Hemagglutinin glycoprotein (617 aa).

Residues methionine 1–valine 37 are Intravirion-facing. A stalk region spans residues methionine 1 to cysteine 154. A helical; Signal-anchor for type II membrane protein transmembrane segment spans residues leucine 38–isoleucine 58. The Virion surface portion of the chain corresponds to arginine 59–arginine 617. Residues asparagine 168, asparagine 187, asparagine 200, asparagine 215, and asparagine 238 are each glycosylated (N-linked (GlcNAc...) asparagine; by host). 5 disulfides stabilise this stretch: cysteine 188–cysteine 606, cysteine 287–cysteine 300, cysteine 381–cysteine 494, cysteine 386–cysteine 394, and cysteine 570–cysteine 579. The tract at residues proline 458–tyrosine 543 is interaction with host NECTIN4 receptor.

The protein belongs to the paramyxoviruses hemagglutinin-neuraminidase family. Non-sialidase subfamily. In terms of assembly, homodimer; disulfide-linked. Further forms homotetramer (dimer of dimers). Interacts (via C-terminus) with human NECTIN4 (via N-terminus); this interaction allows attachment to the respiratory epithelium and viral entry. Interacts (via C-terminus) with human SLAMF1/CD150 (via N-terminus); this interaction allows attachment and viral entry into the CD150-expressing immune cells. Interacts with human CD46 antigen (via N-terminus); this interaction allows attachment and viral entry of vaccine and laboratory-adapted strains.

It is found in the virion membrane. Its subcellular location is the host cell membrane. Functionally, attaches the virus to the human SLAMF1/CD150 receptor for entry into host dendritic cells, macrophages, activated memory T cells and naive or memory B cells, thereby explaining the long immunosuppression that follows infection. In the respiratory airways, binds to the NECTIN4 receptor for entry into the host cell. Binding of H protein to the receptor induces a conformational change that allows the F protein to trigger virion/cell membranes fusion. The vaccine and laboratory-adapted strains use host CD46 as an alternate receptor. The high degree of interaction between H and CD46 results in down-regulation of the latter from the surface of infected cells, rendering them more sensitive to c3b-mediated complement lysis. The sequence is that of Hemagglutinin glycoprotein (H) from Measles virus (strain Edmonston) (MeV).